A 1138-amino-acid polypeptide reads, in one-letter code: Tyrosine-protein kinase receptor Tie-1 (1138 aa).

A signal peptide spans 1-21; that stretch reads MVWRVPPFLLPILFLASHVGA. The Extracellular portion of the chain corresponds to 22 to 759; it reads AVDLTLLANL…SRAAEEGLDQ (738 aa). Positions 43–105 constitute an Ig-like C2-type 1 domain; sequence CVSGEAGAGR…PSDLVGVFSC (63 aa). Asn83 and Asn161 each carry an N-linked (GlcNAc...) asparagine glycan. 3 consecutive EGF-like domains span residues 214-256, 258-303, and 305-345; these read GCGA…TRCE, ACRE…SQCQ, and ACAP…VHCE. Intrachain disulfides connect Cys228–Cys237, Cys231–Cys244, and Cys246–Cys255. Intrachain disulfides connect Cys315–Cys327, Cys321–Cys333, and Cys335–Cys344. The 55-residue stretch at 372 to 426 folds into the Ig-like C2-type 2 domain; sequence CAAAGNPFPVRGSIELRKPDGTVLLSTKAIVEPEKTTAEFEVPRLVLADSGFWEC. 3 consecutive Fibronectin type-III domains span residues 446–545, 548–642, and 646–739; these read PPVP…CPEP, QPWL…LPPS, and APRH…TLGN. 3 N-linked (GlcNAc...) asparagine glycosylation sites follow: Asn503, Asn596, and Asn709. Residues 760–784 form a helical membrane-spanning segment; the sequence is QLILAVVGSVSATCLTILAALLTLV. At 785–1138 the chain is on the cytoplasmic side; sequence CIRRSCLHRR…AGIDATAEEA (354 aa). The region spanning 839–1118 is the Protein kinase domain; the sequence is ITFEDLIGEG…RMLEARKAYV (280 aa). Residues 845–853 and Lys870 contribute to the ATP site; that span reads IGEGNFGQV. Asp979 functions as the Proton acceptor in the catalytic mechanism. Residue Tyr1007 is modified to Phosphotyrosine; by autocatalysis.

This sequence belongs to the protein kinase superfamily. Tyr protein kinase family. Tie subfamily. As to quaternary structure, heterodimer with TEK/TIE2. Interacts with SVEP1 (via C-terminus). Post-translationally, phosphorylated on tyrosine residues in response to ANGPT1, most likely by TEK/TIE2. In terms of tissue distribution, specifically expressed in developing vascular endothelial cells.

The protein resides in the cell membrane. It catalyses the reaction L-tyrosyl-[protein] + ATP = O-phospho-L-tyrosyl-[protein] + ADP + H(+). Transmembrane tyrosine-protein kinase that may modulate TEK/TIE2 activity and contribute to the regulation of angiogenesis. This chain is Tyrosine-protein kinase receptor Tie-1 (TIE1), found in Homo sapiens (Human).